The chain runs to 624 residues: MDLNQRKEKKGQHVGCCGSRTDLSADTVELIERMDRLAENQATASMSIVALPSSFQESNSSDRCRKYCSSDEDSDTCIHGSANASTNATTNSSTNATTTASINVRTSATTTASINVRTSATTTESTNSNTNATTTESTNSSTNATTTASINVRTSATTTESTNSNTSATTTESTDSNTSATTTESTDSNTSATTTASTNSSTNATTTASTNSSTNATTTESTNASAKEDANKDGNAEDNRFHPVTDINKESYKRKGSQMVLLERKKLKAQFPNTSENMNVLQFLGFRSDEIKHLFLYGIDIYFCPEGVFTQYGLCKGCQKMFELCVCWAGQKVSYRRMAWEALAVERMLRNDEEYKEYLEDIEPYHGDPVGYLKFFSVKRGEIYSQIQRNYAWYLAITRRRETISVLDSTRGKQGSQVFRMSGRQIKELYYKVWSNLRESKTEVLQYFLNWDEKKCREEWEAKDDTVFVEALEKVGVFQRLRSMTSAGLQGPQYVKLQFSRHHRQLRSRYELSLGMHLRDQLALGVTPSKVPHWTAFLSMLIGLFYNKTFRQKLEYLLEQISEVWLLPHWVDLANVEVLAADNTRVPLYMLMVAVHKELDSDDVPDGRFDIILLCRDSSREVGE.

A disordered region spans residues 113-249 (SINVRTSATT…RFHPVTDINK (137 aa)). Residues 118 to 225 (TSATTTESTN…ATTTESTNAS (108 aa)) show a composition bias toward low complexity. The span at 226–249 (AKEDANKDGNAEDNRFHPVTDINK) shows a compositional bias: basic and acidic residues.

This is an uncharacterized protein from Saccharomyces cerevisiae (strain ATCC 204508 / S288c) (Baker's yeast).